Consider the following 641-residue polypeptide: MHVKKYLLKCLHRLQKGPGYTYKELLVWYCDNTNTHGPKRIIREGPKKKAMWFLITLLFASLVCWQWGVFIKTYLSWEVSVSLSMGFKAMDFPAVTICNASPFRYSKVRHLLKDLDELMEAVLARILAPESSQANATAAMNLSMWNYTPLVLIDERDPHHPVVLDLFANDPTGSASSSPGPRGACNAQGCKVAMRLCSLNGTSCTFRNFSSATQAVTEWYALQATNIFSQVPQRELVELGYSAERLILACLFGAEPCSYRNFTSIFYPDYGNCYVFNWGMTEKALPSANPGTEFGLKLILDIGQEDYVPFLASTAGVRLMLHEQRSYPFIREEGVDAMSGTETSIGVLVDKLQRKGEPYSPCTVNGSDVPVQNLYGSYNTTYSIQACLHSCFQTQMIASCQCGHYLYPLPRGQEYCNSRDFPDWAPCYLALRMSEAERETCIRMCKESCNDTQYKMTISMADWPSEASEDWIFHVLSQERDQSTNVTLSRKGVVKLNIYFQEFNYRTIEESAANNIVWLLSNLGGQFGFWMGGSVLCLIEFAEIIIDFVWITIIKLVALAKGLRQRQAQARYAGPPPTVAELVEAHTNFGFQPDVGHRSPDAEAYPDEQALPIPGTPPPNYDSLRLQPLDVVESDSEGDAV.

Residues 1 to 50 are Cytoplasmic-facing; sequence MHVKKYLLKCLHRLQKGPGYTYKELLVWYCDNTNTHGPKRIIREGPKKKA. The helical transmembrane segment at 51–71 threads the bilayer; it reads MWFLITLLFASLVCWQWGVFI. Residues 72–533 lie on the Extracellular side of the membrane; the sequence is KTYLSWEVSV…GGQFGFWMGG (462 aa). Intrachain disulfides connect Cys-98–Cys-273, Cys-185–Cys-190, Cys-197–Cys-204, Cys-250–Cys-257, Cys-362–Cys-449, Cys-387–Cys-445, Cys-391–Cys-441, Cys-400–Cys-427, and Cys-402–Cys-416. The N-linked (GlcNAc...) asparagine glycan is linked to Asn-141. 2 N-linked (GlcNAc...) asparagine glycosylation sites follow: Asn-261 and Asn-379. Residues 534-554 traverse the membrane as a helical segment; sequence SVLCLIEFAEIIIDFVWITII. At 555–641 the chain is on the cytoplasmic side; it reads KLVALAKGLR…VESDSEGDAV (87 aa). The disordered stretch occupies residues 596–641; sequence GHRSPDAEAYPDEQALPIPGTPPPNYDSLRLQPLDVVESDSEGDAV. Residues 617–621 carry the PY motif; recruits WW domain-containing proteins and is thereby required for ubiquitination and inhibition of the channel by NEDD4 and NEDD4L motif; sequence PPPNY. Positions 632 to 641 are enriched in acidic residues; it reads VESDSEGDAV. Residues Ser-634 and Ser-636 each carry the phosphoserine modification.

Belongs to the amiloride-sensitive sodium channel (TC 1.A.6) family. SCNN1B subfamily. Component of the heterotrimeric epithelial sodium channel (ENaC) composed of an alpha/SCNN1A, a beta/SCNN1B and a gamma/SCNN1G subunit. Interacts with WWP1 (via WW domains). Interacts with WWP2 (via WW domains); inhibits the channel. Interacts with the full-length immature form of PCSK9 (pro-PCSK9). Interacts (N-glycosylated) with BPIFA1; the interaction is direct and inhibits the proteolytic processing of SCNN1A and SCNN1G and the activation of ENaC. Post-translationally, ubiquitinated. Can be ubiquitinated at multiple sites and undergo monoubiquitination and polyubiquitination. Ubiquitination by NEDD4 or NEDD4L inhibits the ENaC channel through endocytosis, intracellular retention and degradation of its individual subunits. However, some studies could not confirm the ubiquitination of this subunit of the ENaC. In terms of processing, phosphorylated on serine and threonine residues. Aldosterone and insulin increase the basal level of phosphorylation. N-glycosylated. N-glycosylation is required for interaction with BPIFA1.

It localises to the apical cell membrane. The protein localises to the cytoplasmic vesicle membrane. The enzyme catalyses Na(+)(in) = Na(+)(out). Originally identified and characterized by its inhibition by the diuretic drug amiloride. Functionally, this is one of the three pore-forming subunits of the heterotrimeric epithelial sodium channel (ENaC), a critical regulator of sodium balance and fluid homeostasis. ENaC operates in epithelial tissues, where it mediates the electrodiffusion of sodium ions from extracellular fluid through the apical membrane of cells, with water following osmotically. It plays a key role in maintaining sodium homeostasis through electrogenic sodium reabsorption in the kidneys. Additionally, ENaC is essential for airway surface liquid homeostasis, which is crucial for proper mucus clearance. This chain is Epithelial sodium channel subunit beta, found in Oryctolagus cuniculus (Rabbit).